Consider the following 117-residue polypeptide: Ribonuclease P protein component (117 aa).

Belongs to the RnpA family. Consists of a catalytic RNA component (M1 or rnpB) and a protein subunit.

The catalysed reaction is Endonucleolytic cleavage of RNA, removing 5'-extranucleotides from tRNA precursor.. In terms of biological role, RNaseP catalyzes the removal of the 5'-leader sequence from pre-tRNA to produce the mature 5'-terminus. It can also cleave other RNA substrates such as 4.5S RNA. The protein component plays an auxiliary but essential role in vivo by binding to the 5'-leader sequence and broadening the substrate specificity of the ribozyme. The chain is Ribonuclease P protein component from Aliivibrio salmonicida (strain LFI1238) (Vibrio salmonicida (strain LFI1238)).